Consider the following 252-residue polypeptide: MSRKPIIAGNWKMNKNPQEAKAFVEAVASKLPSTDLVDVAVAAPAVDLVTTIEAAKDSVLKVAAQNCYFENTGAFTGETSPKVLAEMGADYVVIGHSERRDYFHETDEDINKKAKAIFANGLTPIICCGESLETYEAGKAAEFVGAQVSAALAGLSAEQVASLVLAYEPIWAIGTGKSATQDDAQNMCKAVRDVVAADFGQEVADKVRVQYGGSVKPENVKDYMACPDVDGALVGGASLEADSFLALLDFLN.

10–12 (NWK) serves as a coordination point for substrate. Residue His96 is the Electrophile of the active site. The active-site Proton acceptor is Glu168. Substrate is bound by residues Gly174, Ser214, and 235-236 (GG).

This sequence belongs to the triosephosphate isomerase family. In terms of assembly, homodimer.

Its subcellular location is the cytoplasm. It carries out the reaction D-glyceraldehyde 3-phosphate = dihydroxyacetone phosphate. It functions in the pathway carbohydrate biosynthesis; gluconeogenesis. Its pathway is carbohydrate degradation; glycolysis; D-glyceraldehyde 3-phosphate from glycerone phosphate: step 1/1. Its function is as follows. Involved in the gluconeogenesis. Catalyzes stereospecifically the conversion of dihydroxyacetone phosphate (DHAP) to D-glyceraldehyde-3-phosphate (G3P). The polypeptide is Triosephosphate isomerase (Streptococcus pyogenes serotype M18 (strain MGAS8232)).